A 509-amino-acid chain; its full sequence is Probable cytochrome P450 4ac3 (509 aa).

Heme is bound at residue C454.

It belongs to the cytochrome P450 family. Heme serves as cofactor.

Its subcellular location is the endoplasmic reticulum membrane. It is found in the microsome membrane. Functionally, may be involved in the metabolism of insect hormones and in the breakdown of synthetic insecticides. In Drosophila melanogaster (Fruit fly), this protein is Probable cytochrome P450 4ac3 (Cyp4ac3).